A 354-amino-acid polypeptide reads, in one-letter code: tRNA-specific 2-thiouridylase MnmA (354 aa).

ATP-binding positions include 6 to 13 (LLSGGVDS) and Leu-33. Cys-100 (nucleophile) is an active-site residue. An intrachain disulfide couples Cys-100 to Cys-195. Gly-123 is an ATP binding site. Residues 145–147 (KDQ) are interaction with tRNA. Cys-195 acts as the Cysteine persulfide intermediate in catalysis.

The protein belongs to the MnmA/TRMU family.

It is found in the cytoplasm. The catalysed reaction is S-sulfanyl-L-cysteinyl-[protein] + uridine(34) in tRNA + AH2 + ATP = 2-thiouridine(34) in tRNA + L-cysteinyl-[protein] + A + AMP + diphosphate + H(+). Its function is as follows. Catalyzes the 2-thiolation of uridine at the wobble position (U34) of tRNA, leading to the formation of s(2)U34. This chain is tRNA-specific 2-thiouridylase MnmA, found in Borrelia hermsii (strain HS1 / DAH).